Consider the following 557-residue polypeptide: Dihydroxy-acid dehydratase (557 aa).

Residue C50 participates in [2Fe-2S] cluster binding. Residue D82 coordinates Mg(2+). C123 contributes to the [2Fe-2S] cluster binding site. 2 residues coordinate Mg(2+): D124 and K125. K125 is modified (N6-carboxylysine). Residue C195 participates in [2Fe-2S] cluster binding. Residue E447 participates in Mg(2+) binding. S473 acts as the Proton acceptor in catalysis.

Belongs to the IlvD/Edd family. As to quaternary structure, homodimer. The cofactor is [2Fe-2S] cluster. It depends on Mg(2+) as a cofactor.

It catalyses the reaction (2R)-2,3-dihydroxy-3-methylbutanoate = 3-methyl-2-oxobutanoate + H2O. It carries out the reaction (2R,3R)-2,3-dihydroxy-3-methylpentanoate = (S)-3-methyl-2-oxopentanoate + H2O. It functions in the pathway amino-acid biosynthesis; L-isoleucine biosynthesis; L-isoleucine from 2-oxobutanoate: step 3/4. Its pathway is amino-acid biosynthesis; L-valine biosynthesis; L-valine from pyruvate: step 3/4. Its function is as follows. Functions in the biosynthesis of branched-chain amino acids. Catalyzes the dehydration of (2R,3R)-2,3-dihydroxy-3-methylpentanoate (2,3-dihydroxy-3-methylvalerate) into 2-oxo-3-methylpentanoate (2-oxo-3-methylvalerate) and of (2R)-2,3-dihydroxy-3-methylbutanoate (2,3-dihydroxyisovalerate) into 2-oxo-3-methylbutanoate (2-oxoisovalerate), the penultimate precursor to L-isoleucine and L-valine, respectively. The chain is Dihydroxy-acid dehydratase from Janthinobacterium sp. (strain Marseille) (Minibacterium massiliensis).